Here is a 651-residue protein sequence, read N- to C-terminus: Acid beta-fructofuranosidase (651 aa).

Topologically, residues 1 to 23 (MEHHKPLLPTSSHAAPNPRTRKD) are cytoplasmic. Positions 1–103 (MEHHKPLLPT…LFSGEGGASE (103 aa)) are cleaved as a propeptide — removed in mature form. A helical; Signal-anchor for type II membrane protein membrane pass occupies residues 24–44 (LLLLLCALLFLSSLVAFGRNR). The Lumenal segment spans residues 45–651 (ASNVPHDHVS…PFPFNPDQKN (607 aa)). The segment at 48 to 76 (VPHDHVSSSASNHQQEHQSPTSLPSSKWH) is disordered. The segment covering 54-72 (SSSASNHQQEHQSPTSLPS) has biased composition (polar residues). Substrate-binding positions include 127 to 130 (WMND), glutamine 146, tryptophan 154, and 189 to 190 (WT). The active site involves aspartate 130. Asparagine 210 is a glycosylation site (N-linked (GlcNAc...) asparagine). 253 to 254 (RD) contacts substrate. An N-linked (GlcNAc...) asparagine glycan is attached at asparagine 275. Substrate is bound by residues glutamate 308 and aspartate 343. Cysteine 500 and cysteine 548 are joined by a disulfide. A glycan (N-linked (GlcNAc...) asparagine) is linked at asparagine 620.

The protein belongs to the glycosyl hydrolase 32 family. In terms of assembly, may be present in two forms, a 70 kDa monomer and a heterodimer of the 30 kDa and 38 kDa subunits. The ratio of the levels of the two forms within cells appears to be regulated developmentally.

Its subcellular location is the membrane. It is found in the vacuole lumen. It carries out the reaction Hydrolysis of terminal non-reducing beta-D-fructofuranoside residues in beta-D-fructofuranosides.. It functions in the pathway glycan biosynthesis; sucrose metabolism. This Phaseolus vulgaris (Kidney bean) protein is Acid beta-fructofuranosidase.